Reading from the N-terminus, the 354-residue chain is UDP-N-acetylglucosamine--N-acetylmuramyl-(pentapeptide) pyrophosphoryl-undecaprenol N-acetylglucosamine transferase (354 aa).

UDP-N-acetyl-alpha-D-glucosamine contacts are provided by residues 11–13 (TAG), arginine 164, serine 194, and glutamine 289.

The protein belongs to the glycosyltransferase 28 family. MurG subfamily.

The protein localises to the cell membrane. The catalysed reaction is di-trans,octa-cis-undecaprenyl diphospho-N-acetyl-alpha-D-muramoyl-L-alanyl-D-glutamyl-meso-2,6-diaminopimeloyl-D-alanyl-D-alanine + UDP-N-acetyl-alpha-D-glucosamine = di-trans,octa-cis-undecaprenyl diphospho-[N-acetyl-alpha-D-glucosaminyl-(1-&gt;4)]-N-acetyl-alpha-D-muramoyl-L-alanyl-D-glutamyl-meso-2,6-diaminopimeloyl-D-alanyl-D-alanine + UDP + H(+). It functions in the pathway cell wall biogenesis; peptidoglycan biosynthesis. In terms of biological role, cell wall formation. Catalyzes the transfer of a GlcNAc subunit on undecaprenyl-pyrophosphoryl-MurNAc-pentapeptide (lipid intermediate I) to form undecaprenyl-pyrophosphoryl-MurNAc-(pentapeptide)GlcNAc (lipid intermediate II). The sequence is that of UDP-N-acetylglucosamine--N-acetylmuramyl-(pentapeptide) pyrophosphoryl-undecaprenol N-acetylglucosamine transferase from Lachnospira eligens (strain ATCC 27750 / DSM 3376 / VPI C15-48 / C15-B4) (Eubacterium eligens).